The primary structure comprises 138 residues: Large ribosomal subunit protein uL16 (138 aa).

It belongs to the universal ribosomal protein uL16 family. As to quaternary structure, part of the 50S ribosomal subunit.

Its function is as follows. Binds 23S rRNA and is also seen to make contacts with the A and possibly P site tRNAs. The sequence is that of Large ribosomal subunit protein uL16 from Chlamydia caviae (strain ATCC VR-813 / DSM 19441 / 03DC25 / GPIC) (Chlamydophila caviae).